The sequence spans 445 residues: Interferon-activable protein 202 (445 aa).

Polar residues predominate over residues 1 to 27; that stretch reads MSNRNLRSSTNSEFSEGQHQTPSSDSS. The tract at residues 1-57 is disordered; sequence MSNRNLRSSTNSEFSEGQHQTPSSDSSGHGEDQPQASPGPNKKSHTPKKNISKGAVL. Residues 42–51 show a composition bias toward basic residues; sequence KKSHTPKKNI. HIN-200 domains lie at 46-243 and 244-441; these read TPKK…IKGE and KLLK…MEVI. 2 required for homomultimerization regions span residues 82–89 and 281–288; these read MFHATVAT.

This sequence belongs to the HIN-200 family. As to quaternary structure, homomultimer; homotetramerizes (via HIN-200 domain 2), enhancing affinity for double-stranded DNA (dsDNA). Interacts (via HIN-200 domain 2) with AIM2 (via HIN-200 domain); preventing activation of the AIM2 inflammasome. Binds to several transcription factors, including NF-kappa-B p50 (NFKB1) and p65 (RELA), FOS, JUN, E2F1, E2F4, MYOD1 and myogenin. Also binds TP53/p53, the hypophosphorylated, growth-inhibitory form of the retinoblastoma protein and the p53-binding protein 1 (TP53BP1). Post-translationally, phosphorylated.

Its subcellular location is the cytoplasm. The protein resides in the nucleus. In terms of biological role, DNA-binding protein involved in innate immune response and has anti-inflammatory activity. Inhibits caspase activation in response to cytosolic DNA by preventing activation of the AIM2 inflammasome, probably by sequestering cytoplasmic DNA and preventing its being bound by AIM2. Also inhibits activation of the AIM2 inflammasome via a direct interaction with AIM2, which prevents the interaction between AIM2 and PYCARD and formation of the AIM2 inflammasome. Binds double-stranded DNA (dsDNA) in the cytosol. Has anti-apoptotic effects due to inhibition of the transcriptional activity of TP53/p53. Inhibits the transcriptional activity of several transcription factors, including NF-kappa-B p50 and p65, FOS, JUN, E2F1, E2F4, MYOD1 and myogenin. The sequence is that of Interferon-activable protein 202 from Mus musculus (Mouse).